The sequence spans 139 residues: Large ribosomal subunit protein uL22 (139 aa).

The disordered stretch occupies residues 1–22 (MVSENEKTRRPKRSIQHRQNKD). The segment covering 9–18 (RRPKRSIQHR) has biased composition (basic residues).

This sequence belongs to the universal ribosomal protein uL22 family. As to quaternary structure, part of the 50S ribosomal subunit.

Its function is as follows. This protein binds specifically to 23S rRNA; its binding is stimulated by other ribosomal proteins, e.g. L4, L17, and L20. It is important during the early stages of 50S assembly. It makes multiple contacts with different domains of the 23S rRNA in the assembled 50S subunit and ribosome. The globular domain of the protein is located near the polypeptide exit tunnel on the outside of the subunit, while an extended beta-hairpin is found that lines the wall of the exit tunnel in the center of the 70S ribosome. This Pseudothermotoga lettingae (strain ATCC BAA-301 / DSM 14385 / NBRC 107922 / TMO) (Thermotoga lettingae) protein is Large ribosomal subunit protein uL22.